Here is a 438-residue protein sequence, read N- to C-terminus: 3-phosphoshikimate 1-carboxyvinyltransferase (438 aa).

3 residues coordinate 3-phosphoshikimate: lysine 21, serine 22, and arginine 26. Lysine 21 lines the phosphoenolpyruvate pocket. Phosphoenolpyruvate is bound by residues glycine 95 and arginine 123. Residues serine 167, glutamine 169, aspartate 315, and lysine 342 each contribute to the 3-phosphoshikimate site. Glutamine 169 contributes to the phosphoenolpyruvate binding site. Catalysis depends on aspartate 315, which acts as the Proton acceptor. Positions 346 and 387 each coordinate phosphoenolpyruvate.

Belongs to the EPSP synthase family. As to quaternary structure, monomer.

The protein resides in the cytoplasm. The enzyme catalyses 3-phosphoshikimate + phosphoenolpyruvate = 5-O-(1-carboxyvinyl)-3-phosphoshikimate + phosphate. Its pathway is metabolic intermediate biosynthesis; chorismate biosynthesis; chorismate from D-erythrose 4-phosphate and phosphoenolpyruvate: step 6/7. Catalyzes the transfer of the enolpyruvyl moiety of phosphoenolpyruvate (PEP) to the 5-hydroxyl of shikimate-3-phosphate (S3P) to produce enolpyruvyl shikimate-3-phosphate and inorganic phosphate. This chain is 3-phosphoshikimate 1-carboxyvinyltransferase, found in Coxiella burnetii (strain RSA 331 / Henzerling II).